Reading from the N-terminus, the 272-residue chain is Golgi to ER traffic protein 5 (272 aa).

2 disordered regions span residues 1-35 (MSTV…HSGT) and 85-105 (LHAP…PGSS). The Ubiquitin-like domain maps to 108-198 (ITVHLKSARN…VEFGVMIIGG (91 aa)). The tract at residues 212–231 (SAEQKESYEPPKPAVGPSGE) is disordered.

Belongs to the GET5 family. Forms homodimers via its C-terminal domain. Component of the get4/get5/sgt2 sorting complex. Binds directly sgt12 homodimers.

The protein localises to the cytoplasm. In terms of biological role, component of the get4/get5/sgt2 sorting complex involved in the GET (guided entry of TA proteins) pathway that leads to the insertion of tail-anchored (TA) proteins into the endoplasmic reticulum. Get4 and get5 form an obligate complex that catalyzes the transfer of tail-anchored proteins destined to the endoplasmic reticulum from sgt2 to the cytosolic targeting factor which then targets the TA protein to the ER membrane via get1/get2. The chain is Golgi to ER traffic protein 5 from Aspergillus fumigatus (strain ATCC MYA-4609 / CBS 101355 / FGSC A1100 / Af293) (Neosartorya fumigata).